We begin with the raw amino-acid sequence, 473 residues long: Adenosylhomocysteinase (473 aa).

Residues Thr-64, Asp-139, and Glu-199 each contribute to the substrate site. 200-202 provides a ligand contact to NAD(+); that stretch reads TTT. Substrate-binding residues include Lys-229 and Asp-233. Residues Asn-234, 263 to 268, Glu-286, Asn-321, 342 to 344, and Asn-387 each bind NAD(+); these read GYGDVG and IGH.

This sequence belongs to the adenosylhomocysteinase family. It depends on NAD(+) as a cofactor.

The protein resides in the cytoplasm. The enzyme catalyses S-adenosyl-L-homocysteine + H2O = L-homocysteine + adenosine. Its pathway is amino-acid biosynthesis; L-homocysteine biosynthesis; L-homocysteine from S-adenosyl-L-homocysteine: step 1/1. May play a key role in the regulation of the intracellular concentration of adenosylhomocysteine. The sequence is that of Adenosylhomocysteinase from Burkholderia mallei (strain SAVP1).